Here is a 227-residue protein sequence, read N- to C-terminus: Cytochrome c oxidase subunit 2 (227 aa).

The Mitochondrial intermembrane segment spans residues 1-14; it reads MAYPFQMGLQDATS. Residues 15 to 45 form a helical membrane-spanning segment; that stretch reads PIMEELLHFHDHTLMIVFLISSLVLYIISLM. At 46 to 59 the chain is on the mitochondrial matrix side; it reads LTTKLTHTSTMDAQ. A helical transmembrane segment spans residues 60–87; sequence EVETIWTILPAIILILIALPSLRILYMM. At 88–227 the chain is on the mitochondrial intermembrane side; the sequence is DEINNPSLTV…HFEKWSASLL (140 aa). Residues H161, C196, E198, C200, H204, and M207 each contribute to the Cu cation site. A Mg(2+)-binding site is contributed by E198.

This sequence belongs to the cytochrome c oxidase subunit 2 family. Component of the cytochrome c oxidase (complex IV, CIV), a multisubunit enzyme composed of 14 subunits. The complex is composed of a catalytic core of 3 subunits MT-CO1, MT-CO2 and MT-CO3, encoded in the mitochondrial DNA, and 11 supernumerary subunits COX4I, COX5A, COX5B, COX6A, COX6B, COX6C, COX7A, COX7B, COX7C, COX8 and NDUFA4, which are encoded in the nuclear genome. The complex exists as a monomer or a dimer and forms supercomplexes (SCs) in the inner mitochondrial membrane with NADH-ubiquinone oxidoreductase (complex I, CI) and ubiquinol-cytochrome c oxidoreductase (cytochrome b-c1 complex, complex III, CIII), resulting in different assemblies (supercomplex SCI(1)III(2)IV(1) and megacomplex MCI(2)III(2)IV(2)). Found in a complex with TMEM177, COA6, COX18, COX20, SCO1 and SCO2. Interacts with TMEM177 in a COX20-dependent manner. Interacts with COX20. Interacts with COX16. Cu cation serves as cofactor.

It is found in the mitochondrion inner membrane. It catalyses the reaction 4 Fe(II)-[cytochrome c] + O2 + 8 H(+)(in) = 4 Fe(III)-[cytochrome c] + 2 H2O + 4 H(+)(out). Its function is as follows. Component of the cytochrome c oxidase, the last enzyme in the mitochondrial electron transport chain which drives oxidative phosphorylation. The respiratory chain contains 3 multisubunit complexes succinate dehydrogenase (complex II, CII), ubiquinol-cytochrome c oxidoreductase (cytochrome b-c1 complex, complex III, CIII) and cytochrome c oxidase (complex IV, CIV), that cooperate to transfer electrons derived from NADH and succinate to molecular oxygen, creating an electrochemical gradient over the inner membrane that drives transmembrane transport and the ATP synthase. Cytochrome c oxidase is the component of the respiratory chain that catalyzes the reduction of oxygen to water. Electrons originating from reduced cytochrome c in the intermembrane space (IMS) are transferred via the dinuclear copper A center (CU(A)) of subunit 2 and heme A of subunit 1 to the active site in subunit 1, a binuclear center (BNC) formed by heme A3 and copper B (CU(B)). The BNC reduces molecular oxygen to 2 water molecules using 4 electrons from cytochrome c in the IMS and 4 protons from the mitochondrial matrix. In Ailurus fulgens (Himalayan red panda), this protein is Cytochrome c oxidase subunit 2 (MT-CO2).